Here is a 390-residue protein sequence, read N- to C-terminus: MRYITAGESHGPQLTVILEGVPAGLTLAAEHINKELLRRQKGHGRGRRMQIETDTVEIVSGVRHGMTLGSPITLIVKNDDFKHWTKVMGAEPISEKESKEMKRTITKPRPGHADLNGAIKYGHRDIRNVLERSSARETTVRVAAGAVAKQILKELGVEIAGHVLEIGGVKAKHISNLSIEEIQIITENSPVRCLDKTVEQEMMDAIDNAKSSGDSIGGIVEVIAEGMPIGVGSYVHYDRKLDAKLAGAIMSINAFKGAEIGVGFEAARQPGSKVHDEILWDEEQGYTRKTNNAGGLEGGMTTGMPIVVRGVMKPIPTLYKPLASVDIDTKEAFQASIERSDSCAVPAAGVVAESVVAWELAHALVEQFGKDRMELIQQNITQHNKYAKEF.

The NADP(+) site is built by R39 and R45. FMN contacts are provided by residues 132 to 134 (RSS), 253 to 254 (NA), G298, 313 to 317 (KPIPT), and R339.

This sequence belongs to the chorismate synthase family. In terms of assembly, homotetramer. FMNH2 serves as cofactor.

The catalysed reaction is 5-O-(1-carboxyvinyl)-3-phosphoshikimate = chorismate + phosphate. Its pathway is metabolic intermediate biosynthesis; chorismate biosynthesis; chorismate from D-erythrose 4-phosphate and phosphoenolpyruvate: step 7/7. Its function is as follows. Catalyzes the anti-1,4-elimination of the C-3 phosphate and the C-6 proR hydrogen from 5-enolpyruvylshikimate-3-phosphate (EPSP) to yield chorismate, which is the branch point compound that serves as the starting substrate for the three terminal pathways of aromatic amino acid biosynthesis. This reaction introduces a second double bond into the aromatic ring system. The protein is Chorismate synthase 2 of Bacillus thuringiensis subsp. konkukian (strain 97-27).